Here is a 513-residue protein sequence, read N- to C-terminus: Activin receptor type-2A (513 aa).

The signal sequence occupies residues 1–19; sequence MGAAAKLAFAVFLISCSSG. Residues 20-135 lie on the Extracellular side of the membrane; sequence AILGRSETQE…TSNPVTPKPP (116 aa). Disulfide bonds link C30–C60, C50–C78, C85–C104, C91–C103, and C105–C110. N43 and N66 each carry an N-linked (GlcNAc...) asparagine glycan. Residues 136–161 traverse the membrane as a helical segment; it reads YYNILLYSLVPLMLIAGIVICAFWVY. Residues 162–513 are Cytoplasmic-facing; the sequence is RHHKMAYPPV…VDFPPKESSL (352 aa). Positions 192-485 constitute a Protein kinase domain; the sequence is LQLLEVKARG…GERITQMQRL (294 aa). ATP-binding positions include 198-206 and K219; that span reads KARGRFGCV. D322 (proton acceptor) is an active-site residue.

This sequence belongs to the protein kinase superfamily. TKL Ser/Thr protein kinase family. TGFB receptor subfamily. Part of a complex consisting of MAGI2/ARIP1, ACVR2A, ACVR1B and SMAD3. Interacts with MAGI2/ARIP1. Interacts with type I receptor ACVR1. Interacts with BMP7. Interacts with TSC22D1/TSC-22. Interacts with activin A/INHBA. Mg(2+) serves as cofactor. The cofactor is Mn(2+).

It localises to the cell membrane. The enzyme catalyses L-threonyl-[receptor-protein] + ATP = O-phospho-L-threonyl-[receptor-protein] + ADP + H(+). It catalyses the reaction L-seryl-[receptor-protein] + ATP = O-phospho-L-seryl-[receptor-protein] + ADP + H(+). Functionally, on ligand binding, forms a receptor complex consisting of two type II and two type I transmembrane serine/threonine kinases. Type II receptors phosphorylate and activate type I receptors which autophosphorylate, then bind and activate SMAD transcriptional regulators. Receptor for activin A, activin B and inhibin A. Mediates induction of adipogenesis by GDF6. The sequence is that of Activin receptor type-2A (ACVR2A) from Bos taurus (Bovine).